The chain runs to 102 residues: Probable non-specific lipid-transfer protein (102 aa).

A signal peptide spans 1 to 35 (MAMAMGMAMRKEAAVAVMMVMVVTLAAGADAGAGA). Intrachain disulfides connect Cys-37–Cys-71, Cys-45–Cys-59, Cys-60–Cys-95, and Cys-69–Cys-102.

The protein belongs to the plant LTP family. B11E subfamily. In terms of tissue distribution, aleurone.

Potential phospholipid transfer protein. This Hordeum vulgare (Barley) protein is Probable non-specific lipid-transfer protein (LTP2).